The following is a 108-amino-acid chain: uncharacterized protein (108 aa).

This is an uncharacterized protein from Rickettsia prowazekii (strain Madrid E).